A 452-amino-acid chain; its full sequence is NADH-ubiquinone oxidoreductase chain 4 (452 aa).

A run of 14 helical transmembrane segments spans residues 7–27, 57–77, 95–115, 116–136, 145–165, 186–206, 218–238, 251–271, 278–298, 303–323, 336–356, 360–380, 386–406, and 428–448; these read VLMS…IIAL, MMSF…ILAS, VILL…MFYI, WFEA…YQPE, MIYT…IFIV, MALA…MFTV, PIAG…YGIL, TSSL…LICL, SLIA…ALMS, FQAA…LFVM, LFLM…WFLF, NMAA…TSIL, AFIL…YMYT, and LTLM…PELI.

This sequence belongs to the complex I subunit 4 family.

It localises to the mitochondrion membrane. The catalysed reaction is a ubiquinone + NADH + 5 H(+)(in) = a ubiquinol + NAD(+) + 4 H(+)(out). Its function is as follows. Core subunit of the mitochondrial membrane respiratory chain NADH dehydrogenase (Complex I) that is believed to belong to the minimal assembly required for catalysis. Complex I functions in the transfer of electrons from NADH to the respiratory chain. The immediate electron acceptor for the enzyme is believed to be ubiquinone. The chain is NADH-ubiquinone oxidoreductase chain 4 (ND4) from Lumbricus terrestris (Common earthworm).